Reading from the N-terminus, the 80-residue chain is Acyl carrier protein (80 aa).

The 76-residue stretch at 4-79 (ANVEQKVKNI…DAVNYITTHK (76 aa)) folds into the Carrier domain. The residue at position 39 (serine 39) is an O-(pantetheine 4'-phosphoryl)serine.

It belongs to the acyl carrier protein (ACP) family. Post-translationally, 4'-phosphopantetheine is transferred from CoA to a specific serine of apo-ACP by AcpS. This modification is essential for activity because fatty acids are bound in thioester linkage to the sulfhydryl of the prosthetic group.

It is found in the cytoplasm. It participates in lipid metabolism; fatty acid biosynthesis. In terms of biological role, carrier of the growing fatty acid chain in fatty acid biosynthesis. This Anaeromyxobacter sp. (strain Fw109-5) protein is Acyl carrier protein.